Consider the following 435-residue polypeptide: ATP-dependent protease ATPase subunit HslU (435 aa).

Residues Ile18, 60 to 65, Asp248, Glu313, and Arg385 each bind ATP; that span reads GVGKTE.

Belongs to the ClpX chaperone family. HslU subfamily. As to quaternary structure, a double ring-shaped homohexamer of HslV is capped on each side by a ring-shaped HslU homohexamer. The assembly of the HslU/HslV complex is dependent on binding of ATP.

The protein localises to the cytoplasm. In terms of biological role, ATPase subunit of a proteasome-like degradation complex; this subunit has chaperone activity. The binding of ATP and its subsequent hydrolysis by HslU are essential for unfolding of protein substrates subsequently hydrolyzed by HslV. HslU recognizes the N-terminal part of its protein substrates and unfolds these before they are guided to HslV for hydrolysis. The sequence is that of ATP-dependent protease ATPase subunit HslU from Ruegeria pomeroyi (strain ATCC 700808 / DSM 15171 / DSS-3) (Silicibacter pomeroyi).